An 86-amino-acid chain; its full sequence is RNA-binding protein Hfq (86 aa).

The Sm domain occupies 9–68 (DPYLNTLRKEKVGVSIYLVNGIKLQGTIESFDQFVILLKNTVSQMVYKHAISTVVPVRPI).

It belongs to the Hfq family. As to quaternary structure, homohexamer.

RNA chaperone that binds small regulatory RNA (sRNAs) and mRNAs to facilitate mRNA translational regulation in response to envelope stress, environmental stress and changes in metabolite concentrations. Also binds with high specificity to tRNAs. The sequence is that of RNA-binding protein Hfq from Pseudomonas savastanoi pv. phaseolicola (strain 1448A / Race 6) (Pseudomonas syringae pv. phaseolicola (strain 1448A / Race 6)).